We begin with the raw amino-acid sequence, 394 residues long: Nuclear hormone receptor family member nhr-18 (394 aa).

The nuclear receptor DNA-binding region spans 8 to 83 (SGSCEVCGDK…VGMDTRRFQT (76 aa)). 2 consecutive NR C4-type zinc fingers follow at residues 11 to 31 (CEVCGDKTSGRHFGVMSCRAC) and 48 to 71 (CPNGTCHTSVNGKFNCKQCRLKKC). The NR LBD domain occupies 134–394 (MLQKPTNHVL…FSHPEMFEAT (261 aa)).

The protein belongs to the nuclear hormone receptor family.

Its subcellular location is the nucleus. In terms of biological role, orphan nuclear receptor. In Caenorhabditis elegans, this protein is Nuclear hormone receptor family member nhr-18 (nhr-18).